The primary structure comprises 1831 residues: Transmembrane protein 131 homolog (1831 aa).

The N-terminal stretch at 1 to 29 (MVPSIHKTSNRYRTIYFFLISLLITSTFA) is a signal peptide. Topologically, residues 30 to 1169 (DQQAWPLPEE…QALPRPPFEN (1140 aa)) are lumenal. The interval 118-294 (EMDPPMMDFG…QSKQIATLVL (177 aa)) is papD-L domain. The helical transmembrane segment at 1170 to 1190 (IMYYSCVTALIFCLVCVLACA) threads the bilayer. Residues 1191–1831 (YLEGDRAIAV…TDNENDEKNN (641 aa)) are Cytoplasmic-facing. A compositionally biased stretch (low complexity) spans 1223–1234 (STTTPVPTVPST). Disordered stretches follow at residues 1223–1252 (STTT…RPST), 1325–1516 (GQQK…PTDD), 1663–1759 (QMKR…VSNP), and 1800–1831 (WSSS…EKNN). A compositionally biased stretch (acidic residues) spans 1338–1349 (PEFDEVEEEELA). Composition is skewed to low complexity over residues 1394 to 1407 (PIIV…PPVQ) and 1435 to 1448 (QVPP…TPKT). Positions 1455–1467 (EPEKPIKPSEQKK) are enriched in basic and acidic residues. The span at 1480–1497 (TPSKARTPSKTPSQSNRA) shows a compositional bias: polar residues. The span at 1500–1514 (PASSPAPIAPTSAPT) shows a compositional bias: low complexity. Polar residues-rich tracts occupy residues 1669–1687 (SPSQ…SPQK), 1702–1733 (NQSS…NSIQ), and 1742–1758 (WGDN…TVSN). The segment covering 1808–1820 (PPTQQPSTSQMPQ) has biased composition (low complexity). Positions 1822 to 1831 (TDNENDEKNN) are enriched in acidic residues.

It belongs to the TMEM131 family. May interact (via PapD-L domain) with collagen proteins (via C-terminus); the interaction is direct and is involved in assembly and secretion of collagen. As to expression, predominantly expressed in the intestine and hypodermis.

The protein resides in the membrane. It localises to the endoplasmic reticulum membrane. Functionally, collagen binding transmembrane protein involved in collagen secretion, probably by recruiting the ER-to-Golgi transport complex TRAPPIII. Required for normal development. This chain is Transmembrane protein 131 homolog, found in Caenorhabditis elegans.